Here is a 654-residue protein sequence, read N- to C-terminus: NADH-ubiquinone oxidoreductase chain 5 (654 aa).

16 consecutive transmembrane segments (helical) span residues 1–21, 30–50, 76–96, 113–133, 135–155, 178–198, 200–220, 241–261, 274–294, 301–320, 324–346, 365–385, 406–426, 451–471, 510–530, and 612–632; these read MYLA…FLGR, LITC…FYEV, FIYD…SALV, FFAY…GDNY, VMFI…NFWF, FSIG…TTVF, LAPF…LVAA, TPVS…YLLL, LILI…TGLL, VIAY…CGLS, VALF…AGSV, LLPF…ALPF, SGNL…MYSI, PLIM…FGYV, FLPL…YWIF, and TYAM…FFIG.

The protein belongs to the complex I subunit 5 family.

Its subcellular location is the mitochondrion inner membrane. The enzyme catalyses a ubiquinone + NADH + 5 H(+)(in) = a ubiquinol + NAD(+) + 4 H(+)(out). Functionally, core subunit of the mitochondrial membrane respiratory chain NADH dehydrogenase (Complex I) that is believed to belong to the minimal assembly required for catalysis. Complex I functions in the transfer of electrons from NADH to the respiratory chain. The immediate electron acceptor for the enzyme is believed to be ubiquinone. The sequence is that of NADH-ubiquinone oxidoreductase chain 5 (ND5) from Rhizopus stolonifer (Rhizopus nigricans).